Reading from the N-terminus, the 519-residue chain is Developmental regulatory protein wetA (519 aa).

Disordered stretches follow at residues 105–165, 270–294, 301–320, 325–344, 389–452, and 470–495; these read PSRP…MRSS, PSSA…WQSD, LSFT…PMPS, QQAS…NVGN, SQIH…GSNK, and LTGV…RRRK. Residues 108–118 show a composition bias toward low complexity; sequence PTATHALSTSP. The segment covering 155 to 165 has biased composition (polar residues); it reads QSFSPSLMRSS. Polar residues predominate over residues 301–315; sequence LSFTPDLQGQDSQWW. Polar residues predominate over residues 389-400; the sequence is SQIHNVSRSPSL. The segment covering 419–428 has biased composition (basic residues); it reads PTHRRTHSRK. Positions 435–452 are enriched in low complexity; that stretch reads NAPKPAKASGSSSRGSNK.

This sequence belongs to the wetA family.

Its function is as follows. BrlA, abaA and wetA are pivotal regulators of conidiophore development and conidium maturation. They act individually and together to regulate their own expression and that of numerous other sporulation-specific genes. The sequence is that of Developmental regulatory protein wetA from Penicillium camembertii.